The following is a 316-amino-acid chain: Pantothenate kinase (316 aa).

ATP is bound at residue Gly-95–Ser-102.

The protein belongs to the prokaryotic pantothenate kinase family.

It localises to the cytoplasm. The catalysed reaction is (R)-pantothenate + ATP = (R)-4'-phosphopantothenate + ADP + H(+). The protein operates within cofactor biosynthesis; coenzyme A biosynthesis; CoA from (R)-pantothenate: step 1/5. This Pectobacterium carotovorum subsp. carotovorum (strain PC1) protein is Pantothenate kinase.